The following is a 309-amino-acid chain: Protoheme IX farnesyltransferase 2 (309 aa).

8 helical membrane-spanning segments follow: residues F35 to V55, M59 to I79, A107 to W127, L131 to L151, I159 to G179, W186 to A206, L238 to I258, and F289 to L309.

It belongs to the UbiA prenyltransferase family. Protoheme IX farnesyltransferase subfamily.

The protein localises to the cell inner membrane. The enzyme catalyses heme b + (2E,6E)-farnesyl diphosphate + H2O = Fe(II)-heme o + diphosphate. It participates in porphyrin-containing compound metabolism; heme O biosynthesis; heme O from protoheme: step 1/1. Converts heme B (protoheme IX) to heme O by substitution of the vinyl group on carbon 2 of heme B porphyrin ring with a hydroxyethyl farnesyl side group. This chain is Protoheme IX farnesyltransferase 2, found in Pseudoalteromonas translucida (strain TAC 125).